Consider the following 236-residue polypeptide: Small ribosomal subunit protein uS2c (236 aa).

This sequence belongs to the universal ribosomal protein uS2 family.

The protein localises to the plastid. Its subcellular location is the chloroplast. In Panax ginseng (Korean ginseng), this protein is Small ribosomal subunit protein uS2c (rps2).